Consider the following 387-residue polypeptide: Patatin group D-2 (387 aa).

The N-terminal stretch at 1 to 23 (MATTKSFLILIVMILATTSSTFA) is a signal peptide. The PNPLA domain occupies 32 to 230 (LSIDGGGIKG…TVADPALLSI (199 aa)). The GXGXXG signature appears at 36 to 41 (GGGIKG). The short motif at 75 to 79 (GTSTG) is the GXSXG element. Residue Ser77 is the Nucleophile of the active site. Residue Asn115 is glycosylated (N-linked (GlcNAc...) asparagine). Asp216 (proton acceptor) is an active-site residue. A DGA/G motif is present at residues 216–218 (DGA). Residues 361–385 (ETYEEALKRFAKLLSDRKKLRANKA) adopt a coiled-coil conformation.

It belongs to the patatin family. Tuber.

The protein resides in the vacuole. Probable lipolytic acyl hydrolase (LAH), an activity which is thought to be involved in the response of tubers to pathogens. The sequence is that of Patatin group D-2 from Solanum tuberosum (Potato).